Consider the following 81-residue polypeptide: Putative defensin-like protein 188 (81 aa).

A signal peptide spans 1–19 (MKNSSLLFILIVVFVISSS). Disulfide bonds link Cys31–Cys81, Cys37–Cys57, Cys43–Cys75, and Cys47–Cys77.

Belongs to the DEFL family.

The protein localises to the secreted. The polypeptide is Putative defensin-like protein 188 (LCR41) (Arabidopsis thaliana (Mouse-ear cress)).